Reading from the N-terminus, the 320-residue chain is Aspartate carbamoyltransferase catalytic subunit (320 aa).

Residues Arg53 and Thr54 each contribute to the carbamoyl phosphate site. Lys82 serves as a coordination point for L-aspartate. Positions 103, 131, and 134 each coordinate carbamoyl phosphate. Arg164 and Arg227 together coordinate L-aspartate. 2 residues coordinate carbamoyl phosphate: Leu266 and Pro267.

This sequence belongs to the aspartate/ornithine carbamoyltransferase superfamily. ATCase family. In terms of assembly, heterododecamer (2C3:3R2) of six catalytic PyrB chains organized as two trimers (C3), and six regulatory PyrI chains organized as three dimers (R2).

It catalyses the reaction carbamoyl phosphate + L-aspartate = N-carbamoyl-L-aspartate + phosphate + H(+). It participates in pyrimidine metabolism; UMP biosynthesis via de novo pathway; (S)-dihydroorotate from bicarbonate: step 2/3. Functionally, catalyzes the condensation of carbamoyl phosphate and aspartate to form carbamoyl aspartate and inorganic phosphate, the committed step in the de novo pyrimidine nucleotide biosynthesis pathway. This chain is Aspartate carbamoyltransferase catalytic subunit, found in Bifidobacterium longum (strain NCC 2705).